The following is a 459-amino-acid chain: UDP-N-acetylmuramate--L-alanine ligase (459 aa).

113–119 (GSHGKTS) provides a ligand contact to ATP.

The protein belongs to the MurCDEF family.

The protein resides in the cytoplasm. The enzyme catalyses UDP-N-acetyl-alpha-D-muramate + L-alanine + ATP = UDP-N-acetyl-alpha-D-muramoyl-L-alanine + ADP + phosphate + H(+). It functions in the pathway cell wall biogenesis; peptidoglycan biosynthesis. Functionally, cell wall formation. This Desulfotalea psychrophila (strain LSv54 / DSM 12343) protein is UDP-N-acetylmuramate--L-alanine ligase.